The chain runs to 961 residues: Glycine dehydrogenase (decarboxylating) (961 aa).

N6-(pyridoxal phosphate)lysine is present on Lys-702.

The protein belongs to the GcvP family. As to quaternary structure, the glycine cleavage system is composed of four proteins: P, T, L and H. The cofactor is pyridoxal 5'-phosphate.

The enzyme catalyses N(6)-[(R)-lipoyl]-L-lysyl-[glycine-cleavage complex H protein] + glycine + H(+) = N(6)-[(R)-S(8)-aminomethyldihydrolipoyl]-L-lysyl-[glycine-cleavage complex H protein] + CO2. Its function is as follows. The glycine cleavage system catalyzes the degradation of glycine. The P protein binds the alpha-amino group of glycine through its pyridoxal phosphate cofactor; CO(2) is released and the remaining methylamine moiety is then transferred to the lipoamide cofactor of the H protein. The polypeptide is Glycine dehydrogenase (decarboxylating) (Rhodopseudomonas palustris (strain BisA53)).